Here is a 324-residue protein sequence, read N- to C-terminus: Phospho-N-acetylmuramoyl-pentapeptide-transferase (324 aa).

10 consecutive transmembrane segments (helical) span residues T9–V29, M54–G74, V77–L97, F117–A137, I147–S167, L176–F196, M201–N221, I227–L247, L253–F273, and V304–F324.

It belongs to the glycosyltransferase 4 family. MraY subfamily. It depends on Mg(2+) as a cofactor.

The protein resides in the cell membrane. The enzyme catalyses UDP-N-acetyl-alpha-D-muramoyl-L-alanyl-gamma-D-glutamyl-meso-2,6-diaminopimeloyl-D-alanyl-D-alanine + di-trans,octa-cis-undecaprenyl phosphate = di-trans,octa-cis-undecaprenyl diphospho-N-acetyl-alpha-D-muramoyl-L-alanyl-D-glutamyl-meso-2,6-diaminopimeloyl-D-alanyl-D-alanine + UMP. Its pathway is cell wall biogenesis; peptidoglycan biosynthesis. Functionally, catalyzes the initial step of the lipid cycle reactions in the biosynthesis of the cell wall peptidoglycan: transfers peptidoglycan precursor phospho-MurNAc-pentapeptide from UDP-MurNAc-pentapeptide onto the lipid carrier undecaprenyl phosphate, yielding undecaprenyl-pyrophosphoryl-MurNAc-pentapeptide, known as lipid I. The protein is Phospho-N-acetylmuramoyl-pentapeptide-transferase of Listeria welshimeri serovar 6b (strain ATCC 35897 / DSM 20650 / CCUG 15529 / CIP 8149 / NCTC 11857 / SLCC 5334 / V8).